The following is a 900-amino-acid chain: DNA mismatch repair protein MutS (900 aa).

637–644 (GPNMAGKS) contacts ATP.

It belongs to the DNA mismatch repair MutS family.

Its function is as follows. This protein is involved in the repair of mismatches in DNA. It is possible that it carries out the mismatch recognition step. This protein has a weak ATPase activity. The sequence is that of DNA mismatch repair protein MutS from Methanosarcina barkeri (strain Fusaro / DSM 804).